The following is a 350-amino-acid chain: Small ribosomal subunit biogenesis GTPase RsgA (350 aa).

Residues 1–17 (MSKNKLSKGQQRRVQAN) are compositionally biased toward polar residues. A disordered region spans residues 1-35 (MSKNKLSKGQQRRVQANHQRRLRTDRKPELDDSQL). Positions 103–273 (TSVLTRPDLY…VIDSPGVREF (171 aa)) constitute a CP-type G domain. GTP contacts are provided by residues 159-162 (NKID) and 213-221 (GQSGVGKSS). Cysteine 297, cysteine 302, histidine 304, and cysteine 310 together coordinate Zn(2+).

This sequence belongs to the TRAFAC class YlqF/YawG GTPase family. RsgA subfamily. As to quaternary structure, monomer. Associates with 30S ribosomal subunit, binds 16S rRNA. The cofactor is Zn(2+).

The protein resides in the cytoplasm. Its function is as follows. One of several proteins that assist in the late maturation steps of the functional core of the 30S ribosomal subunit. Helps release RbfA from mature subunits. May play a role in the assembly of ribosomal proteins into the subunit. Circularly permuted GTPase that catalyzes slow GTP hydrolysis, GTPase activity is stimulated by the 30S ribosomal subunit. The sequence is that of Small ribosomal subunit biogenesis GTPase RsgA from Yersinia enterocolitica serotype O:8 / biotype 1B (strain NCTC 13174 / 8081).